We begin with the raw amino-acid sequence, 364 residues long: CCA-adding enzyme (364 aa).

Residues glycine 19 and arginine 22 each coordinate ATP. Glycine 19 and arginine 22 together coordinate CTP. Residues aspartate 32 and aspartate 34 each contribute to the Mg(2+) site. Residues arginine 102, arginine 148, and arginine 151 each coordinate ATP. The CTP site is built by arginine 102, arginine 148, and arginine 151.

The protein belongs to the tRNA nucleotidyltransferase/poly(A) polymerase family. Bacterial CCA-adding enzyme type 2 subfamily. It depends on Mg(2+) as a cofactor.

The enzyme catalyses a tRNA precursor + 2 CTP + ATP = a tRNA with a 3' CCA end + 3 diphosphate. It carries out the reaction a tRNA with a 3' CCA end + 2 CTP + ATP = a tRNA with a 3' CCACCA end + 3 diphosphate. Catalyzes the addition and repair of the essential 3'-terminal CCA sequence in tRNAs without using a nucleic acid template. Adds these three nucleotides in the order of C, C, and A to the tRNA nucleotide-73, using CTP and ATP as substrates and producing inorganic pyrophosphate. tRNA 3'-terminal CCA addition is required both for tRNA processing and repair. Also involved in tRNA surveillance by mediating tandem CCA addition to generate a CCACCA at the 3' terminus of unstable tRNAs. While stable tRNAs receive only 3'-terminal CCA, unstable tRNAs are marked with CCACCA and rapidly degraded. The sequence is that of CCA-adding enzyme from Bordetella pertussis (strain Tohama I / ATCC BAA-589 / NCTC 13251).